Reading from the N-terminus, the 169-residue chain is MTDTQNRVAMGYIKGVFGIKGWLKIAANTEYSDSLLDYPEWHLAKDGKTVSVTLEAGKVVNGELQVKFEGIDDRDSAFSLRGYTIEIPREAFAPTEEDEYYWADLVGMTVVNKDDTVLGKVSNLMETGANDVLMIDGEHGQILIPFVSQYIETVDTGSKTITADWGLDY.

A PRC barrel domain is found at 97–169; that stretch reads EDEYYWADLV…TITADWGLDY (73 aa).

Belongs to the RimM family. As to quaternary structure, binds ribosomal protein uS19.

The protein localises to the cytoplasm. An accessory protein needed during the final step in the assembly of 30S ribosomal subunit, possibly for assembly of the head region. Essential for efficient processing of 16S rRNA. May be needed both before and after RbfA during the maturation of 16S rRNA. It has affinity for free ribosomal 30S subunits but not for 70S ribosomes. In Neisseria gonorrhoeae (strain ATCC 700825 / FA 1090), this protein is Ribosome maturation factor RimM.